The sequence spans 924 residues: Translation initiation factor IF-2 (924 aa).

Positions 118 to 325 (PSTAHREELA…QAPVVGGVRL (208 aa)) are disordered. Composition is skewed to pro residues over residues 150–173 (APHPGHPGMPTGPHPGPAPKPGGR) and 192–201 (IPRPPAPRPS). Residues 202–212 (ASPSSMSPRPG) show a composition bias toward low complexity. The segment covering 229 to 295 (RPGGGRPGAP…GAAGAFGRPG (67 aa)) has biased composition (gly residues). Residues 299 to 308 (RRGRKSKRQK) show a composition bias toward basic residues. The tr-type G domain maps to 420 to 591 (VRPPVVTVMG…AVLLTADAAL (172 aa)). Residues 429 to 436 (GHVDHGKT) are G1. 429 to 436 (GHVDHGKT) provides a ligand contact to GTP. The segment at 454–458 (GITQH) is G2. The interval 479–482 (DTPG) is G3. GTP contacts are provided by residues 479–483 (DTPGH) and 533–536 (NKID). Residues 533 to 536 (NKID) are G4. A G5 region spans residues 569–571 (SAK).

It belongs to the TRAFAC class translation factor GTPase superfamily. Classic translation factor GTPase family. IF-2 subfamily.

It localises to the cytoplasm. One of the essential components for the initiation of protein synthesis. Protects formylmethionyl-tRNA from spontaneous hydrolysis and promotes its binding to the 30S ribosomal subunits. Also involved in the hydrolysis of GTP during the formation of the 70S ribosomal complex. The polypeptide is Translation initiation factor IF-2 (Mycobacterium leprae (strain Br4923)).